The sequence spans 314 residues: tRNA dimethylallyltransferase 1 (314 aa).

17–24 (GPTAAGKT) contributes to the ATP binding site. Residue 19–24 (TAAGKT) coordinates substrate. Positions 42 to 45 (DSRQ) are interaction with substrate tRNA.

Belongs to the IPP transferase family. In terms of assembly, monomer. Requires Mg(2+) as cofactor.

The catalysed reaction is adenosine(37) in tRNA + dimethylallyl diphosphate = N(6)-dimethylallyladenosine(37) in tRNA + diphosphate. Functionally, catalyzes the transfer of a dimethylallyl group onto the adenine at position 37 in tRNAs that read codons beginning with uridine, leading to the formation of N6-(dimethylallyl)adenosine (i(6)A). The sequence is that of tRNA dimethylallyltransferase 1 from Syntrophotalea carbinolica (strain DSM 2380 / NBRC 103641 / GraBd1) (Pelobacter carbinolicus).